Here is a 553-residue protein sequence, read N- to C-terminus: Salicylyl-CoA synthase / salicylate adenylyltransferase (553 aa).

Gly-203 is a binding site for ATP. Substrate is bound at residue 246–247 (HN). ATP-binding residues include Gly-320, Val-342, Asp-426, Arg-441, and Lys-533. Lys-533 contributes to the substrate binding site.

This sequence belongs to the ATP-dependent AMP-binding enzyme family.

The enzyme catalyses salicylate + ATP + CoA = 2-hydroxybenzoyl-CoA + AMP + diphosphate. Functionally, involved in the degradation of salicylate via a pathway involving coenzyme A derivative. Catalyzes the conversion of salicylate to salicyloyl-CoA via the formation of a salicylate-adenylate intermediate. The substrate specificity is strong, since benzoate, 3-hydroxybenzoate, 4-hydroxybenzoate, gentisate, 2-aminobenzoate, aminobenzoate, salicylamide, salicylaldoxime and 2-hydroxyphenyl acetate cannot substitute for salicylate. In Streptomyces sp, this protein is Salicylyl-CoA synthase / salicylate adenylyltransferase.